The following is a 387-amino-acid chain: UDP-Gal:alpha-D-GlcNAc-diphosphoundecaprenol alpha-1,3-galactosyltransferase (387 aa).

It belongs to the glycosyltransferase group 1 family. Glycosyltransferase 4 subfamily. Requires Mg(2+) as cofactor. It depends on Mn(2+) as a cofactor. Fe(2+) is required as a cofactor.

The catalysed reaction is N-acetyl-alpha-D-glucosaminyl-di-trans,octa-cis-undecaprenyl diphosphate + UDP-alpha-D-galactose = alpha-D-Gal-(1-&gt;3)-alpha-D-GlcNAc-di-trans,octa-cis-undecaprenyl diphosphate + UDP + H(+). Its pathway is bacterial outer membrane biogenesis; LPS O-antigen biosynthesis. Functionally, involved in the biosynthesis of the lipopolysaccharide (LPS) O-antigen region. Catalyzes the transfer of galactose from UDP-galactose to GlcNAc-undecaprenyl diphosphate via an alpha1,3-linkage. Has strict substrate specificity. This Escherichia coli protein is UDP-Gal:alpha-D-GlcNAc-diphosphoundecaprenol alpha-1,3-galactosyltransferase.